The chain runs to 2671 residues: Stalled ribosome sensor GCN1 (2671 aa).

Ala2 is subject to N-acetylalanine. HEAT repeat units follow at residues 140–178, 257–293, 294–331, 385–423, 425–459, 460–503, 560–597, 599–636, 697–732, and 733–770; these read NKLV…ENPG, EFKD…LDLS, QYAM…QCSD, IVAE…EVPK, LTEW…GDTL, LQAL…SVAD, NKVQ…SLGG, KLAH…AGKA, DPEA…SLSV, and LSPD…QTPA. Position 729 is a phosphoserine (Ser729). Ser786 carries the post-translational modification Phosphoserine. A coiled-coil region spans residues 804 to 863; that stretch reads QIIELELKEEIKKKKGIKEEVQLTSKQKEMLQAQLDREAQVRRRLQELDGELEAALGLLD. 36 HEAT repeats span residues 879–925, 979–1016, 1035–1072, 1078–1115, 1155–1192, 1210–1250, 1251–1289, 1290–1332, 1335–1372, 1374–1410, 1413–1451, 1455–1492, 1493–1530, 1534–1571, 1573–1609, 1611–1648, 1653–1690, 1692–1729, 1731–1769, 1773–1810, 1812–1848, 1921–1958, 1959–1996, 2001–2038, 2039–2076, 2078–2106, 2107–2146, 2147–2184, 2188–2225, 2259–2296, 2301–2338, 2339–2380, 2382–2417, 2422–2459, 2546–2583, and 2588–2625; these read VLVD…HVTL, SLVF…QAQL, LPRV…SSSG, FAEQ…VLPA, DLQP…RYQR, YRPP…YLDS, SQVK…THGK, ENVN…HLDK, PKVK…AIKE, AGGM…GLGI, LKQQ…MLGK, PYVV…NLSA, HGVK…CAPK, SCLP…VIRN, EILA…HFID, PSLA…LTDQ, PYLP…GMGE, CFED…GLGV, KLEK…TFGD, PYVG…MYAE, AIAL…HISG, EILP…KLGE, KILP…STSR, YFSE…TIGH, QALE…SRVV, PYLV…DALT, RHLG…VEDD, TGHR…RSKA, SHLR…KLDA, KGVT…LTSA, PSVV…AKVG, IALK…IHIK, DPLF…GAGA, VIRK…FLTE, QLPA…DPLP, and QAIK…MRQG. Residues 2260–2408 are RWDBD region; it reads GVTSILPVLR…GVRDTMLQAL (149 aa). Ser2276 bears the Phosphoserine mark. The HEAT 47; degenerate repeat unit spans residues 2627–2661; sequence EVFQSLSKILDVASLEVLNEVNRRSLKKLASQADS.

This sequence belongs to the GCN1 family. Interacts with EIF2AK4/GCN2; this interaction stimulates the EIF2AK4/GCN2 kinase activity and is impaired by IMPACT upon a variety of stress conditions, such as amino acid depletion, UV-C irradiation, proteasome inhibitor treatment and glucose deprivation. Interacts with IMPACT; this prevents the interaction of GCN1 with EIF2AK4/GCN2 and inhibits EIF2AK4/GCN2 kinase activity. Interacts with RNF14; interaction takes place following ribosome stalling and promotes recruitment of RNF14. In terms of tissue distribution, ubiquitously expressed. Expressed in skeletal muscules, ovary and testis.

Its subcellular location is the cytoplasm. Functionally, ribosome collision sensor that plays a key role in the RNF14-RNF25 translation quality control pathway, a pathway that takes place when a ribosome has stalled during translation, and which promotes ubiquitination and degradation of translation factors on stalled ribosomes. Directly binds to the ribosome and acts as a sentinel for colliding ribosomes: activated following ribosome stalling and promotes recruitment of RNF14, which directly ubiquitinates EEF1A1/eEF1A, leading to its degradation. In addition to EEF1A1/eEF1A, the RNF14-RNF25 translation quality control pathway mediates degradation of ETF1/eRF1 and ubiquitination of ribosomal protein. GCN1 also acts as a positive activator of the integrated stress response (ISR) by mediating activation of EIF2AK4/GCN2 in response to amino acid starvation. Interaction with EIF2AK4/GCN2 on translating ribosomes stimulates EIF2AK4/GCN2 kinase activity, leading to phosphorylation of eukaryotic translation initiation factor 2 (eIF-2-alpha/EIF2S1). EIF2S1/eIF-2-alpha phosphorylation converts EIF2S1/eIF-2-alpha into a global protein synthesis inhibitor, leading to a global attenuation of cap-dependent translation, and thus to a reduced overall utilization of amino acids, while concomitantly initiating the preferential translation of ISR-specific mRNAs, such as the transcriptional activator ATF4, and hence allowing ATF4-mediated reprogramming of amino acid biosynthetic gene expression to alleviate nutrient depletion. In Homo sapiens (Human), this protein is Stalled ribosome sensor GCN1.